The primary structure comprises 94 residues: Large ribosomal subunit protein bL25 (94 aa).

The protein belongs to the bacterial ribosomal protein bL25 family. Part of the 50S ribosomal subunit; part of the 5S rRNA/L5/L18/L25 subcomplex. Contacts the 5S rRNA. Binds to the 5S rRNA independently of L5 and L18.

Functionally, this is one of the proteins that binds to the 5S RNA in the ribosome where it forms part of the central protuberance. This is Large ribosomal subunit protein bL25 from Klebsiella pneumoniae (strain 342).